Reading from the N-terminus, the 347-residue chain is MDLQAQLEELRKSTQATLKEMSGNHSKELQDLRVKVLGKKGSLTELLKGLKDLPNELRPVVGKQVNEVRDVLTKAFEEQAKIVEAAKIQAQLESETLDVTLPGRQIHLGNRHVLSQISEEIEDIFLGMGFQVVDGYEVEQDYYNFERMNLPKDHPARDMQDTFYISEDILLRTHTSPVQARTLDKHDFSKGPLKMISPGRVFRRDTDDATHSHQFHQIEGLVVGKNISMGDLKGTLEMISKKMFGEDRKIRLRPSYFPFTEPSVEVDVSCFKCGGKGCNVCKKTGWIEILGAGMVHPSVLEMSGVNSEEYSGFAFGLGQERMAMLRYGINDIRGFYQGDSRFTEQFN.

Residue E261 participates in Mg(2+) binding.

Belongs to the class-II aminoacyl-tRNA synthetase family. Phe-tRNA synthetase alpha subunit type 1 subfamily. Tetramer of two alpha and two beta subunits. Mg(2+) serves as cofactor.

The protein resides in the cytoplasm. The catalysed reaction is tRNA(Phe) + L-phenylalanine + ATP = L-phenylalanyl-tRNA(Phe) + AMP + diphosphate + H(+). The polypeptide is Phenylalanine--tRNA ligase alpha subunit (Streptococcus mutans serotype c (strain ATCC 700610 / UA159)).